The chain runs to 456 residues: Toxin CfTX-1 (456 aa).

Positions 1–20 (MVKMLFFAFLPLLFMTGIAA) are cleaved as a signal peptide.

It belongs to the jellyfish toxin family. Type I subfamily. Oligomer. Post-translationally, contains disulfide bonds. In terms of tissue distribution, nematocytes.

Its subcellular location is the secreted. It localises to the nematocyst. It is found in the target cell membrane. In terms of biological role, may cause profound effects on the cardiovascular system of anesthetized rats (at 25 ug/kg), since the fraction containing this toxin and CfTX-2 produces an initial increase in mean arterial pressure, followed by cardiovascular collapse in all animals within 1 minute of injection. To note, the same fraction does not induce significant change in heart rate. Has weak hemolytic activity. Is lethal to crayfish. Causes cutaneous inflammation in humans. May act as a pore-forming toxin, disrupting normal transmembrane ion concentration gradients in susceptible cells. This chain is Toxin CfTX-1, found in Chironex fleckeri (Australian box jellyfish).